We begin with the raw amino-acid sequence, 166 residues long: Ribosome maturation factor RimM (166 aa).

The PRC barrel domain occupies 94-166 (EGEYYHADLI…IVIEAAYADQ (73 aa)).

The protein belongs to the RimM family. Binds ribosomal protein uS19.

It localises to the cytoplasm. An accessory protein needed during the final step in the assembly of 30S ribosomal subunit, possibly for assembly of the head region. Essential for efficient processing of 16S rRNA. May be needed both before and after RbfA during the maturation of 16S rRNA. It has affinity for free ribosomal 30S subunits but not for 70S ribosomes. This Novosphingobium aromaticivorans (strain ATCC 700278 / DSM 12444 / CCUG 56034 / CIP 105152 / NBRC 16084 / F199) protein is Ribosome maturation factor RimM.